An 85-amino-acid polypeptide reads, in one-letter code: Colicin-E8 immunity protein in ColE6 (85 aa).

This sequence belongs to the colicins ColE2/ColE8/ColE9 and pyocins S1/S2 family.

This chain is Colicin-E8 immunity protein in ColE6 (imm), found in Escherichia coli.